Here is a 267-residue protein sequence, read N- to C-terminus: Phosphate import ATP-binding protein PstB (267 aa).

An ABC transporter domain is found at 21–262 (IEVKNLNFYY…PREKRTQDYI (242 aa)). 53–60 (GPSGCGKS) contributes to the ATP binding site.

Belongs to the ABC transporter superfamily. Phosphate importer (TC 3.A.1.7) family. As to quaternary structure, the complex is composed of two ATP-binding proteins (PstB), two transmembrane proteins (PstC and PstA) and a solute-binding protein (PstS).

It localises to the cell inner membrane. The enzyme catalyses phosphate(out) + ATP + H2O = ADP + 2 phosphate(in) + H(+). Part of the ABC transporter complex PstSACB involved in phosphate import. Responsible for energy coupling to the transport system. In Mesorhizobium japonicum (strain LMG 29417 / CECT 9101 / MAFF 303099) (Mesorhizobium loti (strain MAFF 303099)), this protein is Phosphate import ATP-binding protein PstB.